Reading from the N-terminus, the 234-residue chain is Probable chemoreceptor glutamine deamidase CheD 1 (234 aa).

Belongs to the CheD family.

The enzyme catalyses L-glutaminyl-[protein] + H2O = L-glutamyl-[protein] + NH4(+). Probably deamidates glutamine residues to glutamate on methyl-accepting chemotaxis receptors (MCPs), playing an important role in chemotaxis. The polypeptide is Probable chemoreceptor glutamine deamidase CheD 1 (Albidiferax ferrireducens (strain ATCC BAA-621 / DSM 15236 / T118) (Rhodoferax ferrireducens)).